A 545-amino-acid chain; its full sequence is Aclacinomycin-N/aclacinomycin-A oxidase (545 aa).

The segment at residues 1–43 (MFVLNEFTRRGFLGTAAAVGGTTVVTTALGGAPAAQAAVPEAA) is a signal peptide (tat-type signal). The FAD-binding PCMH-type domain maps to 76–256 (FRGRPDVVYV…TRYWFRTPGA (181 aa)). A cross-link (6-(S-cysteinyl)-8alpha-(pros-histidyl)-FAD (His-Cys)) is located at residues 113–173 (HCFEGFVDDP…WGVTIPAGVC (61 aa)). Y421 functions as the Proton acceptor in the catalytic mechanism. T451 provides a ligand contact to aclacinomycin Y. Residue N492 participates in FAD binding. Catalysis depends on Y493, which acts as the Proton acceptor. Residue Y493 coordinates aclacinomycin Y.

This sequence belongs to the oxygen-dependent FAD-linked oxidoreductase family. Homotetramer; dimer of dimers. The cofactor is FAD. Post-translationally, predicted to be exported by the Tat system. The position of the signal peptide cleavage has been experimentally proven. In terms of processing, the FAD cofactor is bound via a bicovalent 6-S-cysteinyl, 8alpha-N1-histidyl FAD linkage.

The catalysed reaction is aclacinomycin N + O2 = aclacinomycin A + H2O2. The enzyme catalyses aclacinomycin A + O2 = aclacinomycin Y + H2O2. Its activity is regulated as follows. Inhibited by ascorbic acid and iron ion. Its function is as follows. Involved in the modification of the terminal sugar residues in the last two steps in the biosynthesis of polyketide antibiotics of the aclacinomycin group. In the first reaction, it catalyzes the oxidation of the hydroxyl group at carbon C4 of the L-rhodinose terminal sugar moiety of aclacinomycin N (AclN) to a keto group, modifying the sugar to cinerulose A and generating aclacinomycin A (AclA). In the second reaction, it catalyzes the elimination of two hydrogen atoms from cinerulose A, leading to a double bond between carbon atoms C2 and C3 and the generation of the L-aculose terminal sugar moiety of aclacinomycin Y (AclY). It can also use aclacinomycin analogs, epsilon-pyrromycinone glycosides, rhodirubins (A, B, C and E) and all triglycosides containing L-cinerulose, L-rhodinose or 2-deoxy-L-fucose as terminal sugar. The polypeptide is Aclacinomycin-N/aclacinomycin-A oxidase (Streptomyces galilaeus).